The primary structure comprises 299 residues: Taste receptor type 2 member 5 (299 aa).

A topological domain (extracellular) is located at residue M1. A helical membrane pass occupies residues 2-22 (LSAGLGLLMLVAVVEFLIGLI). Over 23 to 45 (GNGVLVVWSFREWIRKFSWSSYN) the chain is Cytoplasmic. The chain crosses the membrane as a helical span at residues 46-66 (LIILGLAGCRFVLQWLIILDL). Topologically, residues 67 to 82 (SLFPLFQSSRWLRYLS) are extracellular. A helical membrane pass occupies residues 83–103 (IFWVLVSQASLWFATFLSVFY). Over 104–127 (CKKITTFDHPAYLWLKQRAYNLSL) the chain is Cytoplasmic. A helical membrane pass occupies residues 128 to 148 (WCLLGYFIINLLLTVQIGLMF). Topologically, residues 149 to 175 (YHPPQGNSSIRYPFESWQYLYAFRLNS) are extracellular. N155 is a glycosylation site (N-linked (GlcNAc...) asparagine). Residues 176–196 (GSYLPLMVFLVSSGMLIVSLY) traverse the membrane as a helical segment. Over 197-223 (THHKKMKVHSAGRRDVRAKAHITALKS) the chain is Cytoplasmic. A helical membrane pass occupies residues 224–244 (LGCFLLLHLVYIMASPFSIAS). At 245–253 (KTYPPDLTS) the chain is on the extracellular side. Residues 254-274 (VFIWETLMAAYPSLHSLILIM) form a helical membrane-spanning segment. Over 275–299 (GIPRVKQTCQKILWKTVCARRCWGP) the chain is Cytoplasmic.

It belongs to the G-protein coupled receptor T2R family.

It is found in the membrane. Receptor that may play a role in the perception of bitterness and is gustducin-linked. May play a role in sensing the chemical composition of the gastrointestinal content. The activity of this receptor may stimulate alpha gustducin, mediate PLC-beta-2 activation and lead to the gating of TRPM5. This chain is Taste receptor type 2 member 5 (TAS2R5), found in Pan paniscus (Pygmy chimpanzee).